Reading from the N-terminus, the 286-residue chain is uncharacterized protein (286 aa).

The segment at 152-182 (YPSTTTSVTPGKKGEKTTKVDGFSSPLNQDT) is disordered. The chain crosses the membrane as a helical span at residues 198-218 (VLIAVTLFVSGIAITVFVIFE). The interval 239–278 (RRPRKEDQQPGTAESQSDTQPKKVGQEAPNSSSPKKAVEI) is disordered. Polar residues predominate over residues 247-257 (QPGTAESQSDT).

It is found in the membrane. This is an uncharacterized protein from Bos taurus (Bovine).